The following is a 294-amino-acid chain: 4-hydroxy-tetrahydrodipicolinate synthase (294 aa).

Thr45 is a binding site for pyruvate. Catalysis depends on Tyr133, which acts as the Proton donor/acceptor. Lys162 acts as the Schiff-base intermediate with substrate in catalysis. Pyruvate is bound at residue Ile204.

The protein belongs to the DapA family. As to quaternary structure, homotetramer; dimer of dimers.

It is found in the cytoplasm. The enzyme catalyses L-aspartate 4-semialdehyde + pyruvate = (2S,4S)-4-hydroxy-2,3,4,5-tetrahydrodipicolinate + H2O + H(+). The protein operates within amino-acid biosynthesis; L-lysine biosynthesis via DAP pathway; (S)-tetrahydrodipicolinate from L-aspartate: step 3/4. In terms of biological role, catalyzes the condensation of (S)-aspartate-beta-semialdehyde [(S)-ASA] and pyruvate to 4-hydroxy-tetrahydrodipicolinate (HTPA). The protein is 4-hydroxy-tetrahydrodipicolinate synthase of Bartonella henselae (strain ATCC 49882 / DSM 28221 / CCUG 30454 / Houston 1) (Rochalimaea henselae).